The chain runs to 181 residues: Peptide deformylase (181 aa).

Fe cation-binding residues include cysteine 99 and histidine 141. Glutamate 142 is a catalytic residue. Histidine 145 provides a ligand contact to Fe cation.

The protein belongs to the polypeptide deformylase family. The cofactor is Fe(2+).

The enzyme catalyses N-terminal N-formyl-L-methionyl-[peptide] + H2O = N-terminal L-methionyl-[peptide] + formate. In terms of biological role, removes the formyl group from the N-terminal Met of newly synthesized proteins. Requires at least a dipeptide for an efficient rate of reaction. N-terminal L-methionine is a prerequisite for activity but the enzyme has broad specificity at other positions. This chain is Peptide deformylase, found in Chlamydia trachomatis serovar A (strain ATCC VR-571B / DSM 19440 / HAR-13).